Reading from the N-terminus, the 567-residue chain is MLERRCRGPLAMGLAQPRLLSGPSQESPQTLGKESRGLRQQGTSVAQSGAQAPGRAHRCAHCRRHFPGWVALWLHTRRCQARLPLPCPECGRRFRHAPFLALHRQVHAAATPDLGFACHLCGQSFRGWVALVLHLRAHSAAKRPIACPKCERRFWRRKQLRAHLRRCHPPAPEARPFICGNCGRSFAQWDQLVAHKRVHVAEALEEAAAKALGPRPRGRPAVTAPRPGGDAVDRPFQCACCGKRFRHKPNLIAHRRVHTGERPHQCPECGKRFTNKPYLTSHRRIHTGEKPYPCKECGRRFRHKPNLLSHSKIHKRSEGSAQAAPGPGSPQLPAGPQESAAEPTPAVPLKPAQEPPPGAPPEHPQDPIEAPPSLYSCDDCGRSFRLERFLRAHQRQHTGERPFTCAECGKNFGKKTHLVAHSRVHSGERPFACEECGRRFSQGSHLAAHRRDHAPDRPFVCPDCGKAFRHKPYLAAHRRIHTGEKPYVCPDCGKAFSQKSNLVSHRRIHTGERPYACPDCDRSFSQKSNLITHRKSHIRDGAFCCAICGQTFDDEERLLAHQKKHDV.

Positions 17–52 (PRLLSGPSQESPQTLGKESRGLRQQGTSVAQSGAQA) are disordered. Over residues 22-50 (GPSQESPQTLGKESRGLRQQGTSVAQSGA) the composition is skewed to polar residues. Position 27 is a phosphoserine (serine 27). At threonine 30 the chain carries Phosphothreonine. Lysine 33 bears the N6-acetyllysine mark. Residues 57–79 (HRCAHCRRHFPGWVALWLHTRRC) form a C2H2-type 1; atypical zinc finger. 7 C2H2-type zinc fingers span residues 85-107 (LPCP…RQVH), 116-138 (FACH…LRAH), 145-168 (IACP…RRCH), 177-199 (FICG…KRVH), 236-258 (FQCA…RRVH), 264-286 (HQCP…RRIH), and 292-314 (YPCK…SKIH). Residue lysine 276 is modified to N6-acetyllysine. Residues 305–315 (PNLLSHSKIHK) are compositionally biased toward basic residues. Residues 305 to 372 (PNLLSHSKIH…HPQDPIEAPP (68 aa)) are disordered. The span at 345 to 362 (PAVPLKPAQEPPPGAPPE) shows a compositional bias: pro residues. C2H2-type zinc fingers lie at residues 375–397 (YSCD…QRQH), 403–425 (FTCA…SRVH), 431–453 (FACE…RRDH), 459–481 (FVCP…RRIH), 487–509 (YVCP…RRIH), 515–537 (YACP…RKSH), and 543–565 (FCCA…QKKH).

Homodimers and homomultimers. Found in a complex with RIP60 and RIP100. Expressed in adipose tissue and bone tissue.

It is found in the nucleus. Its subcellular location is the cytoplasm. The protein resides in the cytosol. Functionally, sequence-specific double-stranded DNA-binding protein. Binds ATT-rich and T-rich DNA sequences and facilitates DNA bending. May regulate the expression of genes involved in cellular fatty acid import, including SCARB1/CD36, and genes involved in lipid droplet formation. May regulate the expression of LCN2, and thereby influence iron metabolism and apoptosis-related pathways. May regulate the expression of genes involved in glucose transport. The protein is DNA-binding protein REPIN1 (REPIN1) of Homo sapiens (Human).